The following is a 124-amino-acid chain: Probable 5-hydroxyisourate hydrolase (124 aa).

Substrate-binding residues include His16, Arg57, and Tyr121.

Belongs to the transthyretin family. 5-hydroxyisourate hydrolase subfamily. Homotetramer.

It carries out the reaction 5-hydroxyisourate + H2O = 5-hydroxy-2-oxo-4-ureido-2,5-dihydro-1H-imidazole-5-carboxylate + H(+). Catalyzes the hydrolysis of 5-hydroxyisourate (HIU) to 2-oxo-4-hydroxy-4-carboxy-5-ureidoimidazoline (OHCU). The sequence is that of Probable 5-hydroxyisourate hydrolase from Schizosaccharomyces pombe (strain 972 / ATCC 24843) (Fission yeast).